The chain runs to 129 residues: Serum amyloid A-1 protein (129 aa).

An N-terminal signal peptide occupies residues 1–18 (MKLFTGLIFCSLVLGVSS). Residues 19–44 (QWYSFIGEAAQGAWDMYRAYSDMIEA) are important for amyloid formation. The segment at 92–129 (GDSGHGVEDSKADQAANEWGRSGKDPNHFRPPGLPDKY) is disordered.

The protein belongs to the SAA family. As to quaternary structure, homohexamer; dimer of trimers. Can form amyloid fibrils after partial proteolysis; the native, undenatured protein does not form amyloid fibrils (in vitro). Apolipoprotein of the HDL complex. Binds to heparin. Detected in liver.

The protein localises to the secreted. Its function is as follows. Major acute phase protein. In Neovison vison (American mink), this protein is Serum amyloid A-1 protein (SAA1).